The primary structure comprises 2179 residues: Probable inactive serine/threonine-protein kinase lvsG (2179 aa).

The disordered stretch occupies residues Asp100–Ser167. Low complexity-rich tracts occupy residues Asn106 to Gly121 and Leu141 to Ser159. A WD 1 repeat occupies Leu216–Pro256. Disordered stretches follow at residues Leu281–Ser300, Asp523–Trp556, Asp589–Lys621, Lys778–Phe801, Asn844–Ser959, Ala1033–Leu1055, Gly1079–Asp1153, Asn1339–Ser1362, and Thr1785–Leu1807. The BEACH domain maps to Tyr463–Phe801. Positions Asn534 to Asp548 are enriched in low complexity. The segment covering Ser590–Gly602 has biased composition (gly residues). Composition is skewed to low complexity over residues Gln783 to Gln800, Asn853 to Asn943, Ala1033 to Ala1047, and Thr1084 to Asn1098. The stretch at Leu1021–Ser1049 forms a coiled coil. The region spanning Glu1064–Phe1400 is the Protein kinase domain. Positions Met1099–Ile1122 are enriched in polar residues. Low complexity predominate over residues Gln1123–Gln1134. The segment covering Asn1135–Asp1153 has biased composition (polar residues). Composition is skewed to low complexity over residues Asn1339–Asn1360 and Thr1785–Asn1801. WD repeat units follow at residues Glu1864–Thr1903, Gln1906–Val1942, Glu1945–Glu1983, Ser2007–Gln2048, His2052–Ser2089, and Pro2149–Gln2179.

Belongs to the protein kinase superfamily. Ser/Thr protein kinase family.

The chain is Probable inactive serine/threonine-protein kinase lvsG (lvsG) from Dictyostelium discoideum (Social amoeba).